The chain runs to 281 residues: Probable thioesterase gloN (281 aa).

The tract at residues 207 to 233 (LDDGSNNSRDLNETSPTETSNDSETQA) is disordered. Residues 210–232 (GSNNSRDLNETSPTETSNDSETQ) show a composition bias toward polar residues.

It belongs to the AMT4 thioesterase family.

It participates in mycotoxin biosynthesis. Probable thioesterase; part of the gene cluster that mediates the biosynthesis of pneumocandins, lipohexapeptides of the echinocandin family that prevent fungal cell wall formation by non-competitive inhibition of beta-1,3-glucan synthase. The 10,12-dimethylmyristoyl side chain is synthesized by the reducing polyketide synthase gloL/GLPKS4. The thioesterase gloN/GLHYD exclusively interacts with gloL/GLPKS4 to maintain turnover of the polyketide side chain. The 10R,12S-dimethylmyristic acid is then transferred to the first thiolation domain of the nonribosomal peptide synthetase gloA/GLNRPS4 by the acyl-AMP ligase gloD/GLligase, followed by its acylation to L-ornithine to trigger elongation of the cyclic hexapeptide. L-ornithine, 4R-hydroxyl-L-proline (generated from L-proline by the dioxygenase gloF/GLOXY2), 3S-hydroxyl-L-homotyrosine (generated by gloG/GLHtyB, gloH/GLHtyA, gloI/GLHtyC, gloJ/GLHtyD and hydroxylated at C-3 by the dioxygenase gloM/GLOXY1), 3R-hydroxyl-L-glutamine (generated from L-glutamine probably by the dioxygenase gloE/GLOXY3) and 3S-hydroxyl-L-proline (generated from L-proline by the dioxygenase gloF/GLOXY2 to yield pneumocandin B0), or 3S-hydroxyl-4S-methyl-L-proline (generated from L-leucine by the dioxygenase gloC/GLOXY4 to yield pneumocandin A0) are sequentially added to the growing chain. The last C domain of gloA/GLNRPS4 is proposed to be responsible for cyclization by condensation to form the peptide bond between L-ornithine and 3S-hydroxyl-4S-methyl-L-proline (for pneumocandin A0) or 3S-hydroxyl-L-proline (for pneumocandin B0). Finally, the subsequent C-4 hydroxylation of 3S-hydroxyl-L-homotyrosine and L-ornithine dihydroxylation at C-4 and C-5 are performed by the cytochrome P450 monooxygenases gloP/GLP450-1 and gloO/GLP450-2, respectively. The sequence is that of Probable thioesterase gloN from Glarea lozoyensis (strain ATCC 20868 / MF5171).